A 694-amino-acid chain; its full sequence is Elongation factor G (694 aa).

The tr-type G domain maps to 6-288 (KLYRNIGIAA…GVIEYLPSPT (283 aa)). Residues 15–22 (AHVDAGKT), 86–90 (DTPGH), and 140–143 (NKMD) contribute to the GTP site.

It belongs to the TRAFAC class translation factor GTPase superfamily. Classic translation factor GTPase family. EF-G/EF-2 subfamily.

The protein localises to the cytoplasm. Catalyzes the GTP-dependent ribosomal translocation step during translation elongation. During this step, the ribosome changes from the pre-translocational (PRE) to the post-translocational (POST) state as the newly formed A-site-bound peptidyl-tRNA and P-site-bound deacylated tRNA move to the P and E sites, respectively. Catalyzes the coordinated movement of the two tRNA molecules, the mRNA and conformational changes in the ribosome. The protein is Elongation factor G of Legionella pneumophila (strain Corby).